We begin with the raw amino-acid sequence, 75 residues long: Small ribosomal subunit protein bS18 (75 aa).

This sequence belongs to the bacterial ribosomal protein bS18 family. Part of the 30S ribosomal subunit. Forms a tight heterodimer with protein bS6.

Its function is as follows. Binds as a heterodimer with protein bS6 to the central domain of the 16S rRNA, where it helps stabilize the platform of the 30S subunit. In Klebsiella pneumoniae (strain 342), this protein is Small ribosomal subunit protein bS18.